A 309-amino-acid chain; its full sequence is Dihydroorotate dehydrogenase B (NAD(+)), catalytic subunit (309 aa).

Residues serine 21 and 45 to 46 (KA) each bind FMN. Residues lysine 45 and 69 to 73 (NAIGL) contribute to the substrate site. Positions 99 and 127 each coordinate FMN. A substrate-binding site is contributed by asparagine 127. The active-site Nucleophile is cysteine 130. Positions 165 and 191 each coordinate FMN. 192–193 (NT) serves as a coordination point for substrate. Residues glycine 217, 243–244 (GG), and 265–266 (GT) each bind FMN.

It belongs to the dihydroorotate dehydrogenase family. Type 1 subfamily. As to quaternary structure, heterotetramer of 2 PyrK and 2 PyrD type B subunits. FMN serves as cofactor.

It is found in the cytoplasm. It carries out the reaction (S)-dihydroorotate + NAD(+) = orotate + NADH + H(+). The protein operates within pyrimidine metabolism; UMP biosynthesis via de novo pathway; orotate from (S)-dihydroorotate (NAD(+) route): step 1/1. Catalyzes the conversion of dihydroorotate to orotate with NAD(+) as electron acceptor. In Bacillus mycoides (strain KBAB4) (Bacillus weihenstephanensis), this protein is Dihydroorotate dehydrogenase B (NAD(+)), catalytic subunit (pyrD).